A 2727-amino-acid chain; its full sequence is E3 ubiquitin-protein ligase Ufd4 (2727 aa).

Disordered regions lie at residues 247-271 (THSS…TNSD) and 365-389 (RGSN…TDRT). Positions 365-374 (RGSNNPNQGQ) are enriched in polar residues. 3 ANK repeats span residues 422-451 (VGQT…DVNK), 453-482 (QRSS…YPDL), and 486-518 (DGKT…WMSP). The disordered stretch occupies residues 682-702 (AQRSSTSVVVAPRPTSDDPME). Residues 1322–1392 (QIRAQLKHMT…KYDLKLADCE (71 aa)) form the MIB/HERC2 domain. 2 stretches are compositionally biased toward polar residues: residues 1401 to 1430 (QSMG…STPS) and 1437 to 1448 (KNQNPEGASNQT). Disordered stretches follow at residues 1401–1448 (QSMG…SNQT), 1483–1512 (NTSS…GPSP), 1570–1592 (ESVT…REND), 1845–1871 (YPSL…QQSA), 1905–1930 (ALLG…DEYE), and 2092–2115 (STCL…ASTL). The span at 1575–1592 (SQSSSHPDVQSSSPREND) shows a compositional bias: low complexity. Positions 1909-1930 (DLDDEDDMDEDNDEEENEDEYE) are enriched in acidic residues. A compositionally biased stretch (polar residues) spans 2104 to 2115 (PDVSSKSGASTL). The region spanning 2289–2727 (RKSVLEVEFL…ATKEKGFHLN (439 aa)) is the HECT domain. The Glycyl thioester intermediate role is filled by Cys2696.

This sequence belongs to the UPL family. K-HECT subfamily.

It catalyses the reaction S-ubiquitinyl-[E2 ubiquitin-conjugating enzyme]-L-cysteine + [acceptor protein]-L-lysine = [E2 ubiquitin-conjugating enzyme]-L-cysteine + N(6)-ubiquitinyl-[acceptor protein]-L-lysine.. It participates in protein modification; protein ubiquitination. Functionally, E3 ubiquitin-protein ligase which accepts ubiquitin from an E2 ubiquitin-conjugating enzyme in the form of a thioester and then directly transfers the ubiquitin to targeted substrates. Involved in the negative regulation of the Ras/MAPK signaling pathway in the wing by acting with the E2 enzyme Unc6 and the putative E3 ligases poe and Kcmf1 to mediate the ubiquitination and proteasomal degradation of rl/MAPK. The chain is E3 ubiquitin-protein ligase Ufd4 from Drosophila melanogaster (Fruit fly).